Reading from the N-terminus, the 673-residue chain is tRNA 5-methylaminomethyl-2-thiouridine biosynthesis bifunctional protein MnmC (673 aa).

Residues 1-245 are tRNA (mnm(5)s(2)U34)-methyltransferase; that stretch reads MSHAPIQTAA…KREMLIGELP (245 aa). The tract at residues 272 to 673 is FAD-dependent cmnm(5)s(2)U34 oxidoreductase; that stretch reads IGGGVASALT…VRKLLKGRAV (402 aa).

It in the N-terminal section; belongs to the methyltransferase superfamily. tRNA (mnm(5)s(2)U34)-methyltransferase family. This sequence in the C-terminal section; belongs to the DAO family. FAD is required as a cofactor.

It is found in the cytoplasm. It catalyses the reaction 5-aminomethyl-2-thiouridine(34) in tRNA + S-adenosyl-L-methionine = 5-methylaminomethyl-2-thiouridine(34) in tRNA + S-adenosyl-L-homocysteine + H(+). Catalyzes the last two steps in the biosynthesis of 5-methylaminomethyl-2-thiouridine (mnm(5)s(2)U) at the wobble position (U34) in tRNA. Catalyzes the FAD-dependent demodification of cmnm(5)s(2)U34 to nm(5)s(2)U34, followed by the transfer of a methyl group from S-adenosyl-L-methionine to nm(5)s(2)U34, to form mnm(5)s(2)U34. The sequence is that of tRNA 5-methylaminomethyl-2-thiouridine biosynthesis bifunctional protein MnmC from Serratia proteamaculans (strain 568).